Reading from the N-terminus, the 260-residue chain is Phytolongin Phyl2.1 (260 aa).

The 103-residue stretch at 12–114 (CIAKGTVILA…LDNPTQHCLQ (103 aa)) folds into the Longin domain. A helical; Anchor for type IV membrane protein membrane pass occupies residues 231 to 251 (WIVLMFDLCICLVLFGIWLWI).

The protein belongs to the synaptobrevin family.

The protein localises to the membrane. Non-SNARE longin protein involved in membrane-trafficking machinery. This chain is Phytolongin Phyl2.1, found in Arabidopsis thaliana (Mouse-ear cress).